Here is a 118-residue protein sequence, read N- to C-terminus: Hisactophilin-1 (118 aa).

Gly-2 is lipidated: N-myristoyl glycine. The segment at Ser-8–His-109 is contains several HHXH repeats. Repeat copies occupy residues Phe-34–Lys-46 and Phe-74–Lys-86. The interval Phe-34–Lys-86 is 2 X 13 AA approximate repeats.

The protein belongs to the hisactophilin family. In terms of assembly, homodimer or heterodimer of hatA and hatB, linked by a disulfide bond. Phosphorylated.

Its subcellular location is the cytoplasm. The protein resides in the cell membrane. Its function is as follows. May act as an intracellular pH sensor that links chemotactic signals to responses in the microfilament system of the cells by nucleating actin polymerization or stabilizing the filaments. The polypeptide is Hisactophilin-1 (hatA) (Dictyostelium discoideum (Social amoeba)).